Here is a 65-residue protein sequence, read N- to C-terminus: Large ribosomal subunit protein bL35 (65 aa).

This sequence belongs to the bacterial ribosomal protein bL35 family.

The polypeptide is Large ribosomal subunit protein bL35 (Aeromonas salmonicida (strain A449)).